The following is a 249-amino-acid chain: DNA repair protein RecO (249 aa).

The protein belongs to the RecO family.

Involved in DNA repair and RecF pathway recombination. This chain is DNA repair protein RecO, found in Desulforudis audaxviator (strain MP104C).